We begin with the raw amino-acid sequence, 341 residues long: Glyceraldehyde-3-phosphate dehydrogenase 2 (341 aa).

NAD(+)-binding positions include 13 to 14, aspartate 35, and lysine 85; that span reads RI. D-glyceraldehyde 3-phosphate contacts are provided by residues 157 to 159, threonine 188, 217 to 218, and arginine 240; these read SCT and TG. The active-site Nucleophile is cysteine 158. An NAD(+)-binding site is contributed by asparagine 322.

The protein belongs to the glyceraldehyde-3-phosphate dehydrogenase family. In terms of assembly, homotetramer.

It localises to the cytoplasm. It catalyses the reaction D-glyceraldehyde 3-phosphate + phosphate + NAD(+) = (2R)-3-phospho-glyceroyl phosphate + NADH + H(+). Its pathway is carbohydrate degradation; glycolysis; pyruvate from D-glyceraldehyde 3-phosphate: step 1/5. In Caenorhabditis briggsae, this protein is Glyceraldehyde-3-phosphate dehydrogenase 2.